The following is a 226-amino-acid chain: ATP-dependent dethiobiotin synthetase BioD (226 aa).

An ATP-binding site is contributed by Gly14 to Phe19. Thr18 provides a ligand contact to Mg(2+). The active site involves Lys39. Ser43 provides a ligand contact to substrate. ATP is bound by residues Asp56, Glu117 to Gly120, Asn177 to Thr178, Pro206 to Ile208, and Asn213. 2 residues coordinate Mg(2+): Asp56 and Glu117.

This sequence belongs to the dethiobiotin synthetase family. In terms of assembly, homodimer. The cofactor is Mg(2+).

Its subcellular location is the cytoplasm. It carries out the reaction (7R,8S)-7,8-diammoniononanoate + CO2 + ATP = (4R,5S)-dethiobiotin + ADP + phosphate + 3 H(+). It participates in cofactor biosynthesis; biotin biosynthesis; biotin from 7,8-diaminononanoate: step 1/2. Functionally, catalyzes a mechanistically unusual reaction, the ATP-dependent insertion of CO2 between the N7 and N8 nitrogen atoms of 7,8-diaminopelargonic acid (DAPA, also called 7,8-diammoniononanoate) to form a ureido ring. The sequence is that of ATP-dependent dethiobiotin synthetase BioD from Xylella fastidiosa (strain Temecula1 / ATCC 700964).